The sequence spans 102 residues: Large ribosomal subunit protein bL21 (102 aa).

The protein belongs to the bacterial ribosomal protein bL21 family. In terms of assembly, part of the 50S ribosomal subunit. Contacts protein L20.

In terms of biological role, this protein binds to 23S rRNA in the presence of protein L20. The polypeptide is Large ribosomal subunit protein bL21 (Levilactobacillus brevis (strain ATCC 367 / BCRC 12310 / CIP 105137 / JCM 1170 / LMG 11437 / NCIMB 947 / NCTC 947) (Lactobacillus brevis)).